The primary structure comprises 265 residues: Large ribosomal subunit protein bL9m (265 aa).

The N-terminal 49 residues, 1 to 49 (MAASVAPGVRTLWWAGAAWLRQGGIRELFRPRIEGSTPGRDFSLSHYQS), are a transit peptide targeting the mitochondrion.

The protein belongs to the bacterial ribosomal protein bL9 family. As to quaternary structure, component of the mitochondrial ribosome large subunit (39S) which comprises a 16S rRNA and about 50 distinct proteins.

It is found in the mitochondrion. This Mus musculus (Mouse) protein is Large ribosomal subunit protein bL9m (Mrpl9).